Here is a 178-residue protein sequence, read N- to C-terminus: Fatty-acid and retinol-binding protein 1 (178 aa).

The N-terminal stretch at 1-16 (MYHQLILMALIGVIMA) is a signal peptide. Coiled-coil stretches lie at residues 67 to 89 (DAAL…ELRN) and 122 to 154 (QKLD…LKAT).

The protein belongs to the fatty-acid and retinol-binding protein (FARBP) family. Not glycosylated.

It localises to the secreted. Its function is as follows. Binds retinol and different fatty acids. In Litomosoides sigmodontis (Filarial nematode worm), this protein is Fatty-acid and retinol-binding protein 1.